The chain runs to 183 residues: Protein Syd (183 aa).

The protein belongs to the Syd family.

The protein resides in the cell inner membrane. In terms of biological role, interacts with the SecY protein in vivo. May bind preferentially to an uncomplexed state of SecY, thus functioning either as a chelating agent for excess SecY in the cell or as a regulatory factor that negatively controls the translocase function. This Yersinia enterocolitica serotype O:8 / biotype 1B (strain NCTC 13174 / 8081) protein is Protein Syd.